The primary structure comprises 747 residues: Flowering time control protein FCA (747 aa).

Residues 80 to 101 are disordered; that stretch reads YSVRPTTPPVQQPLSGQKRGYP. 2 consecutive RRM domains span residues 120–201 and 211–291; these read VKLF…YADG and FKLF…FAEP. Over residues 291–301 the composition is skewed to basic and acidic residues; it reads PKRPKPGESRE. The interval 291–503 is disordered; that stretch reads PKRPKPGESR…QQPLQKMQHP (213 aa). Composition is skewed to polar residues over residues 320–353 and 395–406; these read RPTSNFGDSSGDVSHTNPWRPATSRNVGPPSNTG and SSSATLQQQNRA. Residues 448–460 show a composition bias toward low complexity; it reads SSQLPTSQLPPQQ. The segment covering 461–498 has biased composition (polar residues); sequence NISRATAPQTPLNINLRPTTVSSATVQFPPRSQQQPLQ. The WW domain occupies 591–624; that stretch reads GSVKCTWTEHTSPDGFKYYYNGLTGESKWEKPEE. Residues 630 to 641 are compositionally biased toward basic and acidic residues; sequence REQQKQQQHQEK. Disordered regions lie at residues 630–707 and 722–747; these read REQQ…SGIG and AASMNDISRTQQSRQSPQELMWKNKA. Positions 642–673 are enriched in low complexity; the sequence is PTIQQSQTQLQPLQQQPQQVQQQYQGQQLQQP. 2 stretches are compositionally biased toward polar residues: residues 674–707 and 726–739; these read FYSSLYPTPGASHNTQYPSLPVGQNSQFPMSGIG and NDISRTQQSRQSPQ.

In terms of assembly, interacts (via C-terminus) with SWI3B and (via WW domain) with FY (via PPLPP motifs). Constitutively expressed, but the negative feedback maintains the active isoform a low level throughout much of the plant, except in meristematic cells at a specific time in development.

The protein localises to the nucleus. Its function is as follows. Plays a major role in the promotion of the transition of the vegetative meristem to reproductive development. Plays a role in the regulation of flowering time in the autonomous flowering pathway by decreasing FLOWERING LOCUS C mRNA levels. Required for RNA-mediated chromatin silencing of a range of loci in the genome. Cotranscriptionally recognizes aberrant RNA and marks it for silencing. Controls alternative cleavage and polyadenylation on pre-mRNAs and antisense RNAs. Acts redundantly with FPA to prevent the expression of distally polyadenylated antisense RNAs at the FLC locus. In Arabidopsis thaliana (Mouse-ear cress), this protein is Flowering time control protein FCA (FCA).